Reading from the N-terminus, the 341-residue chain is Basic membrane protein D (341 aa).

The first 16 residues, methionine 1–alanine 16, serve as a signal peptide directing secretion. The N-palmitoyl cysteine moiety is linked to residue cysteine 17. The S-diacylglycerol cysteine moiety is linked to residue cysteine 17.

Belongs to the BMP lipoprotein family. As to quaternary structure, monomer.

Its subcellular location is the cell inner membrane. Its function is as follows. Binds adenosine and inosine. May be part of an ABC-type nucleoside uptake system involved in the purine salvage pathway. In Borreliella burgdorferi (strain JD1) (Borrelia burgdorferi), this protein is Basic membrane protein D.